The chain runs to 135 residues: ATP synthase epsilon chain (135 aa).

The protein belongs to the ATPase epsilon chain family. As to quaternary structure, F-type ATPases have 2 components, CF(1) - the catalytic core - and CF(0) - the membrane proton channel. CF(1) has five subunits: alpha(3), beta(3), gamma(1), delta(1), epsilon(1). CF(0) has three main subunits: a, b and c.

It is found in the cell inner membrane. Produces ATP from ADP in the presence of a proton gradient across the membrane. The polypeptide is ATP synthase epsilon chain (Mesorhizobium japonicum (strain LMG 29417 / CECT 9101 / MAFF 303099) (Mesorhizobium loti (strain MAFF 303099))).